Here is a 209-residue protein sequence, read N- to C-terminus: Thymidylate kinase (209 aa).

11-18 is an ATP binding site; sequence GIEGAGKT.

It belongs to the thymidylate kinase family.

It carries out the reaction dTMP + ATP = dTDP + ADP. Functionally, phosphorylation of dTMP to form dTDP in both de novo and salvage pathways of dTTP synthesis. This Pasteurella multocida (strain Pm70) protein is Thymidylate kinase (tmk).